The sequence spans 203 residues: Na(+)-translocating NADH-quinone reductase subunit E (203 aa).

6 helical membrane-spanning segments follow: residues 12 to 32 (AVFV…FLAL), 36 to 56 (MEAA…TVPV), 82 to 102 (FLGL…LEMV), 115 to 135 (GVFL…LFMV), 145 to 165 (LVYG…LAGI), and 181 to 201 (LGIT…FSGI).

Belongs to the NqrDE/RnfAE family. As to quaternary structure, composed of six subunits; NqrA, NqrB, NqrC, NqrD, NqrE and NqrF.

Its subcellular location is the cell inner membrane. It carries out the reaction a ubiquinone + n Na(+)(in) + NADH + H(+) = a ubiquinol + n Na(+)(out) + NAD(+). Its function is as follows. NQR complex catalyzes the reduction of ubiquinone-1 to ubiquinol by two successive reactions, coupled with the transport of Na(+) ions from the cytoplasm to the periplasm. NqrA to NqrE are probably involved in the second step, the conversion of ubisemiquinone to ubiquinol. The sequence is that of Na(+)-translocating NADH-quinone reductase subunit E from Hahella chejuensis (strain KCTC 2396).